We begin with the raw amino-acid sequence, 66 residues long: MLKKFKDLTLEDMKARRLALRKEYMDLRFKAVVGHVENPLKKRELRRDIARLNTIIHEYAIGIRKV.

It belongs to the universal ribosomal protein uL29 family.

In Borrelia hermsii (strain HS1 / DAH), this protein is Large ribosomal subunit protein uL29.